Here is an 866-residue protein sequence, read N- to C-terminus: Primer-independent DNA polymerase PolB (866 aa).

The interval 50-286 is exonuclease domain; it reads SDLTLHIGFD…DRVPATIGAM (237 aa). Residues 287–385 are palm1 domain; the sequence is AVSRFTKTLK…GLLDILTPDY (99 aa). The interval 386-481 is TPR1 domain; sequence GNIRLSKNPD…NSESTSVFLP (96 aa). Positions 482-522 are fingers domain; sequence FVQQVRENRNRHIKGSLEEKFWKEIGNSLYGKLAQGLRAKT. Residues 523 to 549 are TPR2 domain; that stretch reads AFDTARGLNRSLPPSSVTQPFFAAHVT. The palm2 domain stretch occupies residues 550–678; sequence GFIRAVVGEL…PGQTLSRSTL (129 aa). The segment at 679-866 is thumb domain; sequence ISTREMWLSE…RKYPTFCLPV (188 aa).

Mn(2+) serves as cofactor.

It carries out the reaction DNA(n) + a 2'-deoxyribonucleoside 5'-triphosphate = DNA(n+1) + diphosphate. In terms of biological role, DNA polymerase with primer-independent templated DNA polymerization activity, primer-dependent DNA polymerization activity with strand displacement, translesion synthesis activity across non-bulky base damage, 3'-5' exodeoxyribonuclease activity, and de novo primer synthesis activity. The enzyme is processive and faithful. Translation synthesis across abasic sites is coupled to de novo primer synthesis. Overexpression of wild-type protein increases survival of cells upon mitomycin C or UV treatment. The chain is Primer-independent DNA polymerase PolB (pi-polB) from Escherichia coli.